A 69-amino-acid chain; its full sequence is Cytochrome c oxidase subunit 8A, mitochondrial (69 aa).

A mitochondrion-targeting transit peptide spans 1–25; that stretch reads MSVLTSLLLRGLTGSARWLPVPRAK. The SIFI-degron motif lies at 2 to 19; the sequence is SVLTSLLLRGLTGSARWL. At 26 to 36 the chain is on the mitochondrial matrix side; it reads VHSMPPEVELG. The helical transmembrane segment at 37–60 threads the bilayer; the sequence is IMEKAIGLTSCFVSLFLPAGWILS. At 61–69 the chain is on the mitochondrial intermembrane side; it reads HLEDYKRPE.

The protein belongs to the cytochrome c oxidase VIII family. In terms of assembly, component of the cytochrome c oxidase (complex IV, CIV), a multisubunit enzyme composed of 14 subunits. The complex is composed of a catalytic core of 3 subunits MT-CO1, MT-CO2 and MT-CO3, encoded in the mitochondrial DNA, and 11 supernumerary subunits COX4I, COX5A, COX5B, COX6A, COX6B, COX6C, COX7A, COX7B, COX7C, COX8 and NDUFA4, which are encoded in the nuclear genome. The complex exists as a monomer or a dimer and forms supercomplexes (SCs) in the inner mitochondrial membrane with NADH-ubiquinone oxidoreductase (complex I, CI) and ubiquinol-cytochrome c oxidoreductase (cytochrome b-c1 complex, complex III, CIII), resulting in different assemblies (supercomplex SCI(1)III(2)IV(1) and megacomplex MCI(2)III(2)IV(2)). Post-translationally, in response to mitochondrial stress, the precursor protein is ubiquitinated by the SIFI complex in the cytoplasm before mitochondrial import, leading to its degradation. Within the SIFI complex, UBR4 initiates ubiquitin chain that are further elongated or branched by KCMF1.

Its subcellular location is the mitochondrion inner membrane. It participates in energy metabolism; oxidative phosphorylation. Functionally, component of the cytochrome c oxidase, the last enzyme in the mitochondrial electron transport chain which drives oxidative phosphorylation. The respiratory chain contains 3 multisubunit complexes succinate dehydrogenase (complex II, CII), ubiquinol-cytochrome c oxidoreductase (cytochrome b-c1 complex, complex III, CIII) and cytochrome c oxidase (complex IV, CIV), that cooperate to transfer electrons derived from NADH and succinate to molecular oxygen, creating an electrochemical gradient over the inner membrane that drives transmembrane transport and the ATP synthase. Cytochrome c oxidase is the component of the respiratory chain that catalyzes the reduction of oxygen to water. Electrons originating from reduced cytochrome c in the intermembrane space (IMS) are transferred via the dinuclear copper A center (CU(A)) of subunit 2 and heme A of subunit 1 to the active site in subunit 1, a binuclear center (BNC) formed by heme A3 and copper B (CU(B)). The BNC reduces molecular oxygen to 2 water molecules using 4 electrons from cytochrome c in the IMS and 4 protons from the mitochondrial matrix. The polypeptide is Cytochrome c oxidase subunit 8A, mitochondrial (COX8A) (Macaca silenus (Lion-tailed macaque)).